Reading from the N-terminus, the 459-residue chain is Magnesium transporter MRS2-11, chloroplastic (459 aa).

The N-terminal 62 residues, 1-62, are a transit peptide targeting the chloroplast; that stretch reads MALTPIPSTF…EALKVLSRSK (62 aa). The segment at 76–122 is disordered; it reads GDYESLNVSDDDDGSDSNSSDGDNGGGRDDSKKIDSSSSSSSSDSTS. The span at 101–110 shows a compositional bias: basic and acidic residues; sequence GGRDDSKKID. A compositionally biased stretch (low complexity) spans 111-122; that stretch reads SSSSSSSSDSTS. 2 helical membrane-spanning segments follow: residues 397 to 417 and 430 to 450; these read LLLQVGTFCVAVGALIAGIFG and AFWLTTGGIIIGAAVAFFLMY. The short motif at 417–419 is the Required for magnesium transport activity element; sequence GMN.

This sequence belongs to the CorA metal ion transporter (MIT) (TC 1.A.35.5) family. In terms of tissue distribution, expressed in the green part of the plant. Preferentially expressed in the spongy mesophyll cells and stomata of young leaves but also detected in cotyledons and at the base of the leaf petioles.

Its subcellular location is the plastid. The protein resides in the chloroplast membrane. In terms of biological role, high-affinity magnesium transporter that mediates the influx of magnesium in chloroplast. This chain is Magnesium transporter MRS2-11, chloroplastic (MRS2-11), found in Arabidopsis thaliana (Mouse-ear cress).